Reading from the N-terminus, the 295-residue chain is ESX-3 secretion-associated protein EspG3 (295 aa).

Belongs to the EspG family. As to quaternary structure, interacts specifically with ESX-3-dependent PE/PPE proteins.

The protein resides in the cytoplasm. In terms of biological role, specific chaperone for cognate PE/PPE proteins. Plays an important role in preventing aggregation of PE/PPE dimers. The sequence is that of ESX-3 secretion-associated protein EspG3 from Mycobacterium tuberculosis (strain CDC 1551 / Oshkosh).